A 276-amino-acid chain; its full sequence is MGIIDVQRSHLTATPSKERDAPAHPPPTILPVCILFPYTSIALPVLMYYIPEKGQFDQNPFLKLIAILPPCLYSAVRFPLLFLGNPESSCTPRPALYATLYLLLDASLLAFSAISILSIAAFTTTEWNSDEVVAVCSTLLPSLLVLPAHLLSTSCALTPGSIGFTDSSVDILIDLLMVSLLAAGLTLNVDESWRFFPYICISSLVLVLAKLLRKSSSMPRRDPAPAPAWRIAAFVLIFGLSMFVYFSILYECLLIFGNHFPWFPSQAPSNDLTNKW.

The interval Met1–His24 is disordered.

The protein belongs to the UPF0328 family.

In Encephalitozoon cuniculi (strain GB-M1) (Microsporidian parasite), this protein is UPF0328 protein ECU04_0100.